A 98-amino-acid polypeptide reads, in one-letter code: ATP-dependent Clp protease adapter protein ClpS (98 aa).

This sequence belongs to the ClpS family. As to quaternary structure, binds to the N-terminal domain of the chaperone ClpA.

Involved in the modulation of the specificity of the ClpAP-mediated ATP-dependent protein degradation. This chain is ATP-dependent Clp protease adapter protein ClpS, found in Synechocystis sp. (strain ATCC 27184 / PCC 6803 / Kazusa).